Consider the following 433-residue polypeptide: tRNA modification GTPase MnmE (433 aa).

Residues Arg-24, Glu-81, and Arg-120 each contribute to the (6S)-5-formyl-5,6,7,8-tetrahydrofolate site. The 144-residue stretch at 216–359 (GVEIVVLGAP…LLAALRARVE (144 aa)) folds into the TrmE-type G domain. Asn-226 serves as a coordination point for K(+). GTP is bound by residues 226 to 231 (NAGKST), 245 to 251 (SDIPGTT), 270 to 273 (DTAG), and 340 to 342 (SAR). Residue Ser-230 participates in Mg(2+) binding. Positions 245, 247, and 250 each coordinate K(+). Mg(2+) is bound at residue Thr-251. (6S)-5-formyl-5,6,7,8-tetrahydrofolate is bound at residue Lys-433.

The protein belongs to the TRAFAC class TrmE-Era-EngA-EngB-Septin-like GTPase superfamily. TrmE GTPase family. As to quaternary structure, homodimer. Heterotetramer of two MnmE and two MnmG subunits. Requires K(+) as cofactor.

Its subcellular location is the cytoplasm. Its function is as follows. Exhibits a very high intrinsic GTPase hydrolysis rate. Involved in the addition of a carboxymethylaminomethyl (cmnm) group at the wobble position (U34) of certain tRNAs, forming tRNA-cmnm(5)s(2)U34. The sequence is that of tRNA modification GTPase MnmE from Acidiphilium cryptum (strain JF-5).